A 509-amino-acid polypeptide reads, in one-letter code: Solute carrier family 2, facilitated glucose transporter member 4 (509 aa).

Residues 1–23 (MPSGFQQIGSDDGEPPRQRVTGT) lie on the Cytoplasmic side of the membrane. An interaction with SRFBP1 region spans residues 7–13 (QIGSDDG). The residue at position 10 (S10) is a Phosphoserine. The chain crosses the membrane as a helical span at residues 24-44 (LVLAVFSAVLGSLQFGYNIGV). Over 45 to 80 (INAPQKVIEQSYNATWLGRQGPGGPDSIPQGTLTTL) the chain is Extracellular. N57 carries N-linked (GlcNAc...) asparagine glycosylation. Residues 81–101 (WALSVAIFSVGGMISSFLIGI) form a helical membrane-spanning segment. Residues 102–110 (ISQWLGRKR) lie on the Cytoplasmic side of the membrane. A helical transmembrane segment spans residues 111-131 (AMLANNVLAVLGGALMGLANA). Residues 132 to 141 (AASYEILILG) lie on the Extracellular side of the membrane. Residues 142 to 162 (RFLIGAYSGLTSGLVPMYVGE) form a helical membrane-spanning segment. Residues 163–170 (IAPTHLRG) lie on the Cytoplasmic side of the membrane. The chain crosses the membrane as a helical span at residues 171–191 (ALGTLNQLAIVIGILVAQVLG). Q177 is a D-glucose binding site. Residues 192 to 200 (LESMLGTAT) lie on the Extracellular side of the membrane. Residues 201 to 221 (LWPLLLALTVLPALLQLILLP) form a helical membrane-spanning segment. Residues 222–286 (FCPESPRYLY…QLLGSRTHRQ (65 aa)) are Cytoplasmic-facing. C223 is lipidated: S-palmitoyl cysteine. S274 is subject to Phosphoserine; by SGK1. Residues 287–307 (PLIIAVVLQLSQQLSGINAVF) form a helical membrane-spanning segment. Residues 298–299 (QQ) and N304 contribute to the D-glucose site. The Extracellular portion of the chain corresponds to 308–322 (YYSTSIFESAGVGQP). A helical membrane pass occupies residues 323-343 (AYATIGAGVVNTVFTLVSVLL). N333 is a binding site for D-glucose. Topologically, residues 344–352 (VERAGRRTL) are cytoplasmic. A helical transmembrane segment spans residues 353 to 373 (HLLGLAGMCGCAILMTVALLL). The Extracellular segment spans residues 374 to 384 (LERVPAMSYVS). Residues 385 to 405 (IVAIFGFVAFFEIGPGPIPWF) traverse the membrane as a helical segment. 2 residues coordinate D-glucose: E396 and W404. The Cytoplasmic portion of the chain corresponds to 406-416 (IVAELFSQGPR). Residues 417 to 437 (PAAMAVAGFSNWTCNFIVGMG) form a helical membrane-spanning segment. Residues 438–444 (FQYVADA) are Extracellular-facing. The chain crosses the membrane as a helical span at residues 445-465 (MGPYVFLLFAVLLLGFFIFTF). Over 466 to 508 (LKVPETRGRTFDQISAAFRRTPSLLEQEVKPSTELEYLGPDEN) the chain is Cytoplasmic. At T486 the chain carries Phosphothreonine. A Phosphoserine modification is found at S488. The short motif at 489 to 490 (LL) is the Dileucine internalization motif element.

It belongs to the major facilitator superfamily. Sugar transporter (TC 2.A.1.1) family. Glucose transporter subfamily. Binds to DAXX. Interacts via its N-terminus with SRFBP1. Interacts with NDUFA9. Interacts with TRARG1; the interaction is required for proper SLC2A4 recycling after insulin stimulation. Sumoylated. In terms of processing, palmitoylated. Palmitoylation by ZDHHC7 controls the insulin-dependent translocation of GLUT4 to the plasma membrane. In terms of tissue distribution, expressed in skeletal and cardiac muscles. Expressed in brown and white adipose tissues.

It localises to the cell membrane. Its subcellular location is the endomembrane system. The protein resides in the cytoplasm. It is found in the perinuclear region. The catalysed reaction is D-glucose(out) = D-glucose(in). Its function is as follows. Insulin-regulated facilitative glucose transporter, which plays a key role in removal of glucose from circulation. Response to insulin is regulated by its intracellular localization: in the absence of insulin, it is efficiently retained intracellularly within storage compartments in muscle and fat cells. Upon insulin stimulation, translocates from these compartments to the cell surface where it transports glucose from the extracellular milieu into the cell. The protein is Solute carrier family 2, facilitated glucose transporter member 4 of Mus musculus (Mouse).